The chain runs to 340 residues: Zinc finger protein 367 (340 aa).

Residues 96 to 140 are disordered; the sequence is LPTLRGAPPSSASVAAVSGGEDEEEASSPDSGHLKDGIRRGRPRA. Residues 101–114 are compositionally biased toward low complexity; it reads GAPPSSASVAAVSG. Residues 127–140 are compositionally biased toward basic and acidic residues; it reads GHLKDGIRRGRPRA. 2 C2H2-type zinc fingers span residues 157 to 179 and 185 to 209; these read IRCNICNRVFPREKSLQAHKRTH and YLCDYPDCGKAFVQSGQLKTHQRLH. The interval 280 to 317 is disordered; it reads KGKLVQKADQEQQDPLEYLQSDEEDDEKSGAQRRLQEQ. Residues 299–332 adopt a coiled-coil conformation; sequence QSDEEDDEKSGAQRRLQEQRERLHGALALIELAN. Serine 300 is modified (phosphoserine). Over residues 307–317 the composition is skewed to basic and acidic residues; sequence KSGAQRRLQEQ.

Belongs to the krueppel C2H2-type zinc-finger protein family.

The protein localises to the nucleus. Functionally, transcriptional activator. May be involved in transcriptional activation of erythroid genes. In Rattus norvegicus (Rat), this protein is Zinc finger protein 367 (Znf367).